A 289-amino-acid polypeptide reads, in one-letter code: 4-hydroxy-tetrahydrodipicolinate synthase (289 aa).

T45 is a pyruvate binding site. Y133 acts as the Proton donor/acceptor in catalysis. K161 functions as the Schiff-base intermediate with substrate in the catalytic mechanism. I200 is a pyruvate binding site.

This sequence belongs to the DapA family. In terms of assembly, homotetramer; dimer of dimers.

It is found in the cytoplasm. It carries out the reaction L-aspartate 4-semialdehyde + pyruvate = (2S,4S)-4-hydroxy-2,3,4,5-tetrahydrodipicolinate + H2O + H(+). The protein operates within amino-acid biosynthesis; L-lysine biosynthesis via DAP pathway; (S)-tetrahydrodipicolinate from L-aspartate: step 3/4. Functionally, catalyzes the condensation of (S)-aspartate-beta-semialdehyde [(S)-ASA] and pyruvate to 4-hydroxy-tetrahydrodipicolinate (HTPA). This Coxiella burnetii (strain Dugway 5J108-111) protein is 4-hydroxy-tetrahydrodipicolinate synthase.